Consider the following 1027-residue polypeptide: Translation initiation factor IF-2 (1027 aa).

The disordered stretch occupies residues 31 to 433 (YVKSASSTVE…GGVRLPRGNG (403 aa)). The segment covering 57 to 68 (KKGGGDSNGRAG) has biased composition (gly residues). Residues 110-122 (GPKPGPKPGPKAP) show a composition bias toward pro residues. The segment covering 123–145 (APETKPFEEAPAPAAKADAPAQP) has biased composition (low complexity). The segment covering 148–171 (EQPRSEQPRSEQPRSEQPRSERSG) has biased composition (basic and acidic residues). Pro residues-rich tracts occupy residues 174–188 (PGGP…PKPG) and 201–212 (PPKPQSPKPGPR). Over residues 237–268 (PGGGQRQGGQGPGRGGPQGGRPDRQGGGGQGA) the composition is skewed to gly residues. Pro residues predominate over residues 293–302 (GMMPPRPNPG). Gly residues predominate over residues 311-397 (SGGGPGGGRG…GAAGAFGRPG (87 aa)). Residues 401–410 (RRGRKSKRQK) are compositionally biased toward basic residues. In terms of domain architecture, tr-type G spans 523–695 (SRPPVVTVMG…ILLTADATLD (173 aa)). The G1 stretch occupies residues 532–539 (GHVDHGKT). 532-539 (GHVDHGKT) contacts GTP. A G2 region spans residues 557-561 (GITQH). A G3 region spans residues 582–585 (DTPG). GTP contacts are provided by residues 582-586 (DTPGH) and 636-639 (NKID). The interval 636–639 (NKID) is G4. Residues 672 to 674 (SAR) form a G5 region.

This sequence belongs to the TRAFAC class translation factor GTPase superfamily. Classic translation factor GTPase family. IF-2 subfamily.

Its subcellular location is the cytoplasm. One of the essential components for the initiation of protein synthesis. Protects formylmethionyl-tRNA from spontaneous hydrolysis and promotes its binding to the 30S ribosomal subunits. Also involved in the hydrolysis of GTP during the formation of the 70S ribosomal complex. In Saccharopolyspora erythraea (strain ATCC 11635 / DSM 40517 / JCM 4748 / NBRC 13426 / NCIMB 8594 / NRRL 2338), this protein is Translation initiation factor IF-2.